Reading from the N-terminus, the 259-residue chain is Thiazole synthase (259 aa).

Catalysis depends on lysine 95, which acts as the Schiff-base intermediate with DXP. 1-deoxy-D-xylulose 5-phosphate-binding positions include glycine 156, alanine 182–glycine 183, and asparagine 204–threonine 205.

It belongs to the ThiG family. Homotetramer. Forms heterodimers with either ThiH or ThiS.

The protein localises to the cytoplasm. The catalysed reaction is [ThiS sulfur-carrier protein]-C-terminal-Gly-aminoethanethioate + 2-iminoacetate + 1-deoxy-D-xylulose 5-phosphate = [ThiS sulfur-carrier protein]-C-terminal Gly-Gly + 2-[(2R,5Z)-2-carboxy-4-methylthiazol-5(2H)-ylidene]ethyl phosphate + 2 H2O + H(+). It participates in cofactor biosynthesis; thiamine diphosphate biosynthesis. Its function is as follows. Catalyzes the rearrangement of 1-deoxy-D-xylulose 5-phosphate (DXP) to produce the thiazole phosphate moiety of thiamine. Sulfur is provided by the thiocarboxylate moiety of the carrier protein ThiS. In vitro, sulfur can be provided by H(2)S. The chain is Thiazole synthase from Serratia proteamaculans (strain 568).